The primary structure comprises 684 residues: Glycine--tRNA ligase beta subunit (684 aa).

This sequence belongs to the class-II aminoacyl-tRNA synthetase family. In terms of assembly, tetramer of two alpha and two beta subunits.

The protein resides in the cytoplasm. It catalyses the reaction tRNA(Gly) + glycine + ATP = glycyl-tRNA(Gly) + AMP + diphosphate. In Ectopseudomonas mendocina (strain ymp) (Pseudomonas mendocina), this protein is Glycine--tRNA ligase beta subunit.